The chain runs to 166 residues: Peptide deformylase (166 aa).

Positions 88 and 130 each coordinate Fe cation. The active site involves Glu-131. Residue His-134 coordinates Fe cation.

Belongs to the polypeptide deformylase family. It depends on Fe(2+) as a cofactor.

The catalysed reaction is N-terminal N-formyl-L-methionyl-[peptide] + H2O = N-terminal L-methionyl-[peptide] + formate. Removes the formyl group from the N-terminal Met of newly synthesized proteins. Requires at least a dipeptide for an efficient rate of reaction. N-terminal L-methionine is a prerequisite for activity but the enzyme has broad specificity at other positions. The protein is Peptide deformylase of Caldicellulosiruptor bescii (strain ATCC BAA-1888 / DSM 6725 / KCTC 15123 / Z-1320) (Anaerocellum thermophilum).